Here is a 335-residue protein sequence, read N- to C-terminus: UPF0353 protein MUL_1490 (335 aa).

The next 2 helical transmembrane spans lie at 18 to 38 (WFFLFLLVVAGLIAIYVVLQL) and 67 to 87 (IPAMLLALSLVLFTVAMAGPT). In terms of domain architecture, VWFA spans 98–298 (VVMLVIDVSQ…SVYVSLQQQI (201 aa)). Residues 309–329 (MGWLRLGALVLVAAALAALLI) form a helical membrane-spanning segment.

Belongs to the UPF0353 family.

It is found in the cell membrane. The polypeptide is UPF0353 protein MUL_1490 (Mycobacterium ulcerans (strain Agy99)).